A 409-amino-acid polypeptide reads, in one-letter code: MKLKRIAALLTAAVMSVGVMASCGGSKSDDKSKADTKSAAETSGAEGDSSESEEIPVSQTHTNDPMTVTSAKDLVAKMSNGWNLGNTMDATGEGLESEISWLPTKVYTNKFMIDMLPEAGFNVLRIPVSWGNHLIDNNYTIDPAWMDRVQEIVNYGIDDGMYVILNTHHEEWYMPKPSEKDGDIEELKAIWSQIADRFKGYDEHLIFEGLNEPRLRGEGAEWTGTSEAREIINEYEKAFVETVRASGGNNGDRCLMITGYAASSGYNNLSAIELPEDSDKLIISVHAYLPYSFALDTKGTDKYDPEDTAIPTLFESLNELFISRDIPVIVGEFGSMNKDNIDDRVKCLDDYLGNAAKYDIPCVWWDNYARIGNGENFGLLNRQEYDWYFPKLMDVFKKYAESDPSAAAA.

The signal sequence occupies residues 1-21; sequence MKLKRIAALLTAAVMSVGVMA. The interval 23 to 66 is disordered; it reads CGGSKSDDKSKADTKSAAETSGAEGDSSESEEIPVSQTHTNDPM. The span at 27–38 shows a compositional bias: basic and acidic residues; it reads KSDDKSKADTKS. The span at 57-66 shows a compositional bias: polar residues; the sequence is VSQTHTNDPM. Glu212 acts as the Proton donor in catalysis. The active-site Nucleophile is the Glu332.

It belongs to the glycosyl hydrolase 5 (cellulase A) family.

It catalyses the reaction Endohydrolysis of (1-&gt;4)-beta-D-glucosidic linkages in cellulose, lichenin and cereal beta-D-glucans.. The sequence is that of Endoglucanase B (celB) from Ruminococcus albus.